A 487-amino-acid polypeptide reads, in one-letter code: MDHDDFDSVSWRHGPDSDISRPTTSGTDTAESPETRRDPNGKRRMSSASEIPQAGPHADALDLAGIGDGVLECRVDTPIKENDGTKDAYISYLVTTHTDFKSFQKADFTVRRRFTDFVFLYKTLYREYPACAVPPLPDKHKMEYVRGDRFGAEFTTRRAWSLHRFLKRLTLHPVLRRAPLLAIFLESPDWNAHMRLRGSRASTSGSDGGGTGIFDNFTDTFVNAFTKVHKPDRRFIEVREKADKLDEDLTHVEKIVARVARREADLETDYNDLATQFRKLVPLEPEVEVPLQVFAASVEETARGIKNLKDHTDQNYLGSLRDMEAYILSVKSLLKTREQKQLDFEALVDYRNKAVAERDSLAANPSSYYASNPLTSSPASFIRSKMEDMRGVDHEQSRRERMRKLELRIDELTREVESAKTTSEMFDEEVVREVADFERIKAIEFRDSLGALAEQHIEFYQGVLNTWERFVAEMEEEQSTGDAHPNA.

Positions 1–59 are disordered; sequence MDHDDFDSVSWRHGPDSDISRPTTSGTDTAESPETRRDPNGKRRMSSASEIPQAGPHAD. Polar residues predominate over residues 20-32; it reads SRPTTSGTDTAES. The PX domain occupies 70–192; that stretch reads VLECRVDTPI…IFLESPDWNA (123 aa). Arginine 113, threonine 115, lysine 139, and arginine 158 together coordinate a 1,2-diacyl-sn-glycero-3-phospho-(1D-myo-inositol-3-phosphate). Residues 395 to 430 are a coiled coil; that stretch reads EQSRRERMRKLELRIDELTREVESAKTTSEMFDEEV.

It belongs to the sorting nexin family.

It localises to the cytoplasm. The protein resides in the cytosol. Its subcellular location is the preautophagosomal structure membrane. The protein localises to the endosome membrane. Sorting nexin, involved in the separation or division of vacuoles throughout the entire life cycle of the cells. Involved in retrieval of late-Golgi SNAREs from post-Golgi endosomes to the trans-Golgi network, for cytoplasm to vacuole transport (Cvt), and autophagy of large cargos including mitophagy, pexophagy and glycophagy. This chain is Sorting nexin-4 (snx4), found in Emericella nidulans (strain FGSC A4 / ATCC 38163 / CBS 112.46 / NRRL 194 / M139) (Aspergillus nidulans).